Here is a 200-residue protein sequence, read N- to C-terminus: Large ribosomal subunit protein bL25 (200 aa).

A disordered region spans residues 1-20 (MEARELKANVRKESGKEQAR).

This sequence belongs to the bacterial ribosomal protein bL25 family. CTC subfamily. Part of the 50S ribosomal subunit; part of the 5S rRNA/L5/L18/L25 subcomplex. Contacts the 5S rRNA. Binds to the 5S rRNA independently of L5 and L18.

In terms of biological role, this is one of the proteins that binds to the 5S RNA in the ribosome where it forms part of the central protuberance. This Syntrophus aciditrophicus (strain SB) protein is Large ribosomal subunit protein bL25.